The sequence spans 921 residues: Probable TonB-dependent receptor NMB1497 (921 aa).

A signal peptide spans 1–25 (MRSSFRLKPICFYLMGVTLYHYSYA). The TBDR plug domain occupies 53 to 174 (DKKVFTDARA…LAGSANLRTL (122 aa)). A TBDR beta-barrel domain is found at 185 to 921 (TYGLLLKGLT…TFLMTMSYKF (737 aa)). A TonB C-terminal box motif is present at residues 904 to 921 (LTNFARGRTFLMTMSYKF).

It belongs to the TonB-dependent receptor family.

It is found in the cell outer membrane. Functionally, probable receptor, TonB-dependent. The polypeptide is Probable TonB-dependent receptor NMB1497 (Neisseria meningitidis serogroup B (strain ATCC BAA-335 / MC58)).